The chain runs to 129 residues: Small ribosomal subunit protein uS9 (129 aa).

Belongs to the universal ribosomal protein uS9 family.

The polypeptide is Small ribosomal subunit protein uS9 (Pelodictyon phaeoclathratiforme (strain DSM 5477 / BU-1)).